A 178-amino-acid chain; its full sequence is Large ribosomal subunit protein uL13m (178 aa).

This sequence belongs to the universal ribosomal protein uL13 family. In terms of assembly, component of the mitochondrial ribosome large subunit (39S) which comprises a 16S rRNA and about 50 distinct proteins.

Its subcellular location is the mitochondrion. This Drosophila melanogaster (Fruit fly) protein is Large ribosomal subunit protein uL13m (mRpL13).